We begin with the raw amino-acid sequence, 242 residues long: DNA repair protein RecO (242 aa).

The protein belongs to the RecO family.

Involved in DNA repair and RecF pathway recombination. The polypeptide is DNA repair protein RecO (Vibrio atlanticus (strain LGP32) (Vibrio splendidus (strain Mel32))).